The following is a 260-amino-acid chain: Thiazole synthase (260 aa).

Lys100 functions as the Schiff-base intermediate with DXP in the catalytic mechanism. Residues Gly161, 187–188, and 209–210 contribute to the 1-deoxy-D-xylulose 5-phosphate site; these read AG and NT.

Belongs to the ThiG family. In terms of assembly, homotetramer. Forms heterodimers with either ThiH or ThiS.

It is found in the cytoplasm. The enzyme catalyses [ThiS sulfur-carrier protein]-C-terminal-Gly-aminoethanethioate + 2-iminoacetate + 1-deoxy-D-xylulose 5-phosphate = [ThiS sulfur-carrier protein]-C-terminal Gly-Gly + 2-[(2R,5Z)-2-carboxy-4-methylthiazol-5(2H)-ylidene]ethyl phosphate + 2 H2O + H(+). It functions in the pathway cofactor biosynthesis; thiamine diphosphate biosynthesis. In terms of biological role, catalyzes the rearrangement of 1-deoxy-D-xylulose 5-phosphate (DXP) to produce the thiazole phosphate moiety of thiamine. Sulfur is provided by the thiocarboxylate moiety of the carrier protein ThiS. In vitro, sulfur can be provided by H(2)S. In Dechloromonas aromatica (strain RCB), this protein is Thiazole synthase.